The primary structure comprises 299 residues: Probable lipid kinase YegS (299 aa).

Residues 2–133 (ANFPASLLIL…IDMARVNDKT (132 aa)) enclose the DAGKc domain. ATP is bound by residues Thr-40, 66–72 (GDGTINE), and Thr-95. Positions 215, 218, and 220 each coordinate Mg(2+). Glu-271 serves as the catalytic Proton acceptor.

Belongs to the diacylglycerol/lipid kinase family. YegS lipid kinase subfamily. Mg(2+) serves as cofactor. The cofactor is Ca(2+).

Its subcellular location is the cytoplasm. Its function is as follows. Probably phosphorylates lipids; the in vivo substrate is unknown. In Salmonella agona (strain SL483), this protein is Probable lipid kinase YegS.